Reading from the N-terminus, the 349-residue chain is MSRVKVAVLGATGSVGQRFIQLLDHHPFFEVTHLCASENSAGKTYGEVMKTRWKISSDIPAYAKNLVITTPDPAKTKDVVLAFSGLDSNVAGEVEKNYANAGIHIISNSKNHRMDPTVPILSAEVNSSHLEVLTSQKTKGKIITNSNCTIMGVTISLKPLLDRFGIESVMLFSMQAISGAGYPGVPTMDILGNVIPHIGGEEEKAEIEPLKCLGKVENGKILHADFSISAHCNRVPVFDGHTVCVSVKFKKKPSREEIISSWKDFSGEPQTLGLPLAPNPVILFREEEDRPQPRLDLDTGKGMTTVIGRLRPDPILDWKYVVLSHNTIRGAAGAALLNAELLYKKKFLG.

Residues 12–15 (TGSV) and 39–40 (NS) each bind NADP(+). Residue Arg-113 participates in phosphate binding. Residue Cys-148 is the Acyl-thioester intermediate of the active site. Gln-175 contacts substrate. 178 to 179 (SG) is an NADP(+) binding site. Position 201 (Glu-201) interacts with substrate. Phosphate is bound at residue Lys-204. Arg-234 lines the substrate pocket. His-241 functions as the Proton acceptor in the catalytic mechanism. 326–327 (NT) provides a ligand contact to NADP(+).

The protein belongs to the aspartate-semialdehyde dehydrogenase family. As to quaternary structure, homodimer.

It carries out the reaction L-aspartate 4-semialdehyde + phosphate + NADP(+) = 4-phospho-L-aspartate + NADPH + H(+). Its pathway is amino-acid biosynthesis; L-lysine biosynthesis via DAP pathway; (S)-tetrahydrodipicolinate from L-aspartate: step 2/4. The protein operates within amino-acid biosynthesis; L-methionine biosynthesis via de novo pathway; L-homoserine from L-aspartate: step 2/3. It functions in the pathway amino-acid biosynthesis; L-threonine biosynthesis; L-threonine from L-aspartate: step 2/5. Catalyzes the NADPH-dependent formation of L-aspartate-semialdehyde (L-ASA) by the reductive dephosphorylation of L-aspartyl-4-phosphate. The sequence is that of Aspartate-semialdehyde dehydrogenase from Leptospira interrogans serogroup Icterohaemorrhagiae serovar Lai (strain 56601).